Here is a 205-residue protein sequence, read N- to C-terminus: MFLRHFIVFSFIALLAGCAGFGARESVQGQGNPAQWRLHKDQLTGLDGWQINGKIGIRAPKDSGSGTLFWLQRQDYYDIRLSGPLGRGAARLTGRPGQVSLEVANQGRYESASPETLLEEQLGWKLPVSHLAWWVRGLPAPDSKSRLTLDGDSHLASLEQDGWQVEYSSYSQQNGYWLPERIKLNGSDLDVTLVIKEWLPRKLGQ.

Positions 1–17 (MFLRHFIVFSFIALLAG) are cleaved as a signal peptide. A lipid anchor (N-palmitoyl cysteine) is attached at cysteine 18. Cysteine 18 carries the S-diacylglycerol cysteine lipid modification.

Belongs to the LolB family. In terms of assembly, monomer.

It is found in the cell outer membrane. In terms of biological role, plays a critical role in the incorporation of lipoproteins in the outer membrane after they are released by the LolA protein. The polypeptide is Outer-membrane lipoprotein LolB (Pseudomonas fluorescens (strain ATCC BAA-477 / NRRL B-23932 / Pf-5)).